A 731-amino-acid polypeptide reads, in one-letter code: DNA topoisomerase 1 (731 aa).

The 114-residue stretch at 17-130 (KHLVIVESPA…KRIVFNEITP (114 aa)) folds into the Toprim domain. Mg(2+)-binding residues include E23 and D96. Positions 144–569 (DTAKVNAQKA…DFYPAFSEKV (426 aa)) constitute a Topo IA-type catalytic domain. The tract at residues 178–183 (SAGRVQ) is interaction with DNA. Y312 serves as the catalytic O-(5'-phospho-DNA)-tyrosine intermediate. 3 consecutive C4-type zinc fingers follow at residues 591 to 617 (CSQC…FPEC), 628 to 657 (CPRP…FPVC), and 670 to 696 (CPQC…NPEC).

The protein belongs to the type IA topoisomerase family. Monomer. The cofactor is Mg(2+).

The catalysed reaction is ATP-independent breakage of single-stranded DNA, followed by passage and rejoining.. Its function is as follows. Releases the supercoiling and torsional tension of DNA, which is introduced during the DNA replication and transcription, by transiently cleaving and rejoining one strand of the DNA duplex. Introduces a single-strand break via transesterification at a target site in duplex DNA. The scissile phosphodiester is attacked by the catalytic tyrosine of the enzyme, resulting in the formation of a DNA-(5'-phosphotyrosyl)-enzyme intermediate and the expulsion of a 3'-OH DNA strand. The free DNA strand then undergoes passage around the unbroken strand, thus removing DNA supercoils. Finally, in the religation step, the DNA 3'-OH attacks the covalent intermediate to expel the active-site tyrosine and restore the DNA phosphodiester backbone. In Treponema pallidum (strain Nichols), this protein is DNA topoisomerase 1.